Consider the following 941-residue polypeptide: Bifunctional glutamine synthetase adenylyltransferase/adenylyl-removing enzyme (941 aa).

Residues 1–431 (MSSAPPFAAA…TFRNAFRLAG (431 aa)) form an adenylyl removase region. The tract at residues 447-941 (NGHAMRPHAG…DGTIAQAEVK (495 aa)) is adenylyl transferase.

It belongs to the GlnE family. Mg(2+) is required as a cofactor.

It carries out the reaction [glutamine synthetase]-O(4)-(5'-adenylyl)-L-tyrosine + phosphate = [glutamine synthetase]-L-tyrosine + ADP. The enzyme catalyses [glutamine synthetase]-L-tyrosine + ATP = [glutamine synthetase]-O(4)-(5'-adenylyl)-L-tyrosine + diphosphate. Its function is as follows. Involved in the regulation of glutamine synthetase GlnA, a key enzyme in the process to assimilate ammonia. When cellular nitrogen levels are high, the C-terminal adenylyl transferase (AT) inactivates GlnA by covalent transfer of an adenylyl group from ATP to specific tyrosine residue of GlnA, thus reducing its activity. Conversely, when nitrogen levels are low, the N-terminal adenylyl removase (AR) activates GlnA by removing the adenylyl group by phosphorolysis, increasing its activity. The regulatory region of GlnE binds the signal transduction protein PII (GlnB) which indicates the nitrogen status of the cell. This chain is Bifunctional glutamine synthetase adenylyltransferase/adenylyl-removing enzyme, found in Bordetella pertussis (strain Tohama I / ATCC BAA-589 / NCTC 13251).